Reading from the N-terminus, the 257-residue chain is Flap endonuclease Xni (257 aa).

Mg(2+) is bound at residue Asp109. The 91-residue stretch at 165–255 (LKPEQLADYW…FNLQDIRYEK (91 aa)) folds into the 5'-3' exonuclease domain. Positions 176, 177, 187, and 190 each coordinate K(+). Residues 189 to 194 (GIGPKA) form an interaction with DNA region.

This sequence belongs to the Xni family. Mg(2+) serves as cofactor. It depends on K(+) as a cofactor.

In terms of biological role, has flap endonuclease activity. During DNA replication, flap endonucleases cleave the 5'-overhanging flap structure that is generated by displacement synthesis when DNA polymerase encounters the 5'-end of a downstream Okazaki fragment. In Aliivibrio salmonicida (strain LFI1238) (Vibrio salmonicida (strain LFI1238)), this protein is Flap endonuclease Xni.